Here is a 159-residue protein sequence, read N- to C-terminus: Putative 4-hydroxy-4-methyl-2-oxoglutarate aldolase (159 aa).

Residues 78 to 81 (GDVI) and Arg100 contribute to the substrate site. Asp101 is a binding site for a divalent metal cation.

The protein belongs to the class II aldolase/RraA-like family. As to quaternary structure, homotrimer. It depends on a divalent metal cation as a cofactor.

The catalysed reaction is 4-hydroxy-4-methyl-2-oxoglutarate = 2 pyruvate. It carries out the reaction oxaloacetate + H(+) = pyruvate + CO2. In terms of biological role, catalyzes the aldol cleavage of 4-hydroxy-4-methyl-2-oxoglutarate (HMG) into 2 molecules of pyruvate. Also contains a secondary oxaloacetate (OAA) decarboxylase activity due to the common pyruvate enolate transition state formed following C-C bond cleavage in the retro-aldol and decarboxylation reactions. The sequence is that of Putative 4-hydroxy-4-methyl-2-oxoglutarate aldolase from Mycobacterium sp. (strain JLS).